A 342-amino-acid chain; its full sequence is Heparan sulfate glucosamine 3-O-sulfotransferase 6 (342 aa).

A disordered region spans residues Met-1 to Gln-21. At Met-1–Pro-31 the chain is on the cytoplasmic side. Residues Met-32–Gly-49 form a helical; Signal-anchor for type II membrane protein membrane-spanning segment. The Lumenal segment spans residues Arg-50–Gly-342. The segment at Ala-55–Pro-85 is disordered. Residues Glu-66–Pro-85 are compositionally biased toward low complexity. 3'-phosphoadenylyl sulfate is bound at residue Lys-100–Arg-104. Substrate-binding positions include Glu-122–Arg-128 and Lys-153–Ser-156. Residues Arg-181 and Ser-189 each contribute to the 3'-phosphoadenylyl sulfate site. Trp-220–Ser-221 serves as a coordination point for substrate. A glycan (N-linked (GlcNAc...) asparagine) is linked at Asn-281. Cysteines 288 and 300 form a disulfide. Lys-305 to His-309 contributes to the 3'-phosphoadenylyl sulfate binding site.

This sequence belongs to the sulfotransferase 1 family.

The protein localises to the golgi apparatus membrane. It carries out the reaction alpha-D-glucosaminyl-[heparan sulfate](n) + 3'-phosphoadenylyl sulfate = 3-sulfo-alpha-D-glucosaminyl-[heparan sulfate](n) + adenosine 3',5'-bisphosphate + H(+). Functionally, sulfotransferase that utilizes 3'-phospho-5'-adenylyl sulfate (PAPS) to catalyze the transfer of a sulfo group to heparan sulfate. The substrate-specific O-sulfation generates an enzyme-modified heparan sulfate which acts as a binding receptor to Herpes Simplex Virus-1 (HSV-1) and permits its entry. Unlike 3-OST-1, does not convert non-anticoagulant heparan sulfate to anticoagulant heparan sulfate. The polypeptide is Heparan sulfate glucosamine 3-O-sulfotransferase 6 (HS3ST6) (Homo sapiens (Human)).